A 158-amino-acid polypeptide reads, in one-letter code: SsrA-binding protein (158 aa).

It belongs to the SmpB family.

It localises to the cytoplasm. Functionally, required for rescue of stalled ribosomes mediated by trans-translation. Binds to transfer-messenger RNA (tmRNA), required for stable association of tmRNA with ribosomes. tmRNA and SmpB together mimic tRNA shape, replacing the anticodon stem-loop with SmpB. tmRNA is encoded by the ssrA gene; the 2 termini fold to resemble tRNA(Ala) and it encodes a 'tag peptide', a short internal open reading frame. During trans-translation Ala-aminoacylated tmRNA acts like a tRNA, entering the A-site of stalled ribosomes, displacing the stalled mRNA. The ribosome then switches to translate the ORF on the tmRNA; the nascent peptide is terminated with the 'tag peptide' encoded by the tmRNA and targeted for degradation. The ribosome is freed to recommence translation, which seems to be the essential function of trans-translation. In Caldicellulosiruptor bescii (strain ATCC BAA-1888 / DSM 6725 / KCTC 15123 / Z-1320) (Anaerocellum thermophilum), this protein is SsrA-binding protein.